The following is a 103-amino-acid chain: MTGRGKGGKGLGKGGAKRHRKVLRDNIQGITKPAIRRLARRGGVKRISSLIYEETRGVLKVFLENVIRDAVTYTEHAKIPTVTAMDVVYALKRQGRTLYGFGG.

The span at 1–14 shows a compositional bias: gly residues; the sequence is MTGRGKGGKGLGKG. Residues 1-20 are disordered; it reads MTGRGKGGKGLGKGGAKRHR. 2 positions are modified to N6-acetyl-N6-methyllysine; alternate: lysine 6 and lysine 13. The DNA-binding element occupies 17–21; the sequence is KRHRK.

Belongs to the histone H4 family. The nucleosome is a histone octamer containing two molecules each of H2A, H2B, H3 and H4 assembled in one H3-H4 heterotetramer and two H2A-H2B heterodimers. The octamer wraps approximately 147 bp of DNA.

The protein localises to the nucleus. It localises to the chromosome. Functionally, core component of nucleosome. Nucleosomes wrap and compact DNA into chromatin, limiting DNA accessibility to the cellular machineries which require DNA as a template. Histones thereby play a central role in transcription regulation, DNA repair, DNA replication and chromosomal stability. DNA accessibility is regulated via a complex set of post-translational modifications of histones, also called histone code, and nucleosome remodeling. The polypeptide is Histone H4 (Trichogramma cacaeciae (Moth egg parasite)).